Consider the following 102-residue polypeptide: Small ribosomal subunit protein uS10 (102 aa).

This sequence belongs to the universal ribosomal protein uS10 family. In terms of assembly, part of the 30S ribosomal subunit.

Functionally, involved in the binding of tRNA to the ribosomes. The chain is Small ribosomal subunit protein uS10 from Enterococcus faecalis (strain ATCC 700802 / V583).